A 299-amino-acid chain; its full sequence is Ankyrin repeat domain-containing protein 54 (299 aa).

Residues 1–27 (MAATGGGADDESRSGRSSSDGECAVAP) are disordered. An N-acetylalanine modification is found at Ala2. Ser62 carries the post-translational modification Phosphoserine. The Nuclear localization signal (NLS) signature appears at 98–116 (RRLGPTGKEVHALKRLRDS). ANK repeat units follow at residues 108 to 137 (HALK…DPCA), 141 to 170 (KGRT…DPNQ), 174 to 203 (LGNT…RVDA), and 207 to 239 (AGRT…EVKQ). The tract at residues 140–240 (DKGRTALHFA…EAVRLEVKQI (101 aa)) is LYN-binding. The Nuclear export signal (NES) signature appears at 282–292 (LLASFTSLSLQ).

Interacts (via ankyrin repeat region) with LYN (via SH3-domain) in an activation-independent status of LYN. Forms a multiprotein complex with LYN and HCLS1. Interacts with TSN2, VAV1, DBNL and LASP1. As to expression, expressed in a variety of hemopoietic cell lines and tissue with high levels in testis. Highly expressed in ciliated cells.

It is found in the nucleus. The protein resides in the cytoplasm. Its subcellular location is the midbody. Plays an important role in regulating intracellular signaling events associated with erythroid terminal differentiation. The protein is Ankyrin repeat domain-containing protein 54 (Ankrd54) of Mus musculus (Mouse).